Here is a 190-residue protein sequence, read N- to C-terminus: Peptidyl-tRNA hydrolase (190 aa).

A tRNA-binding site is contributed by Tyr14. His19 serves as the catalytic Proton acceptor. Positions 64, 66, and 112 each coordinate tRNA.

This sequence belongs to the PTH family. In terms of assembly, monomer.

The protein resides in the cytoplasm. It catalyses the reaction an N-acyl-L-alpha-aminoacyl-tRNA + H2O = an N-acyl-L-amino acid + a tRNA + H(+). Its function is as follows. Hydrolyzes ribosome-free peptidyl-tRNAs (with 1 or more amino acids incorporated), which drop off the ribosome during protein synthesis, or as a result of ribosome stalling. In terms of biological role, catalyzes the release of premature peptidyl moieties from peptidyl-tRNA molecules trapped in stalled 50S ribosomal subunits, and thus maintains levels of free tRNAs and 50S ribosomes. This Chlorobium luteolum (strain DSM 273 / BCRC 81028 / 2530) (Pelodictyon luteolum) protein is Peptidyl-tRNA hydrolase.